The following is a 391-amino-acid chain: MSRFLICSFALVLLYPAGIDMYLVGLPRIAADLNASEAQLHIAFSVYLAGMAAAMLFAGKVADRSGRKPVAIPGAALFIIASVFCSLAETSTLFLAGRFLQGLGAGCCYVVAFAILRDTLDDRRRAKVLSLLNGITCIIPVLAPVLGHLIMLKFPWQSLFWTMATMGIAVLMLSLFILKETRPAAPAASDKPRENSESLLNRFFLSRVVITTLSVSVILTFVNTSPVLLMEIMGFERGEYATIMALTAGVSMTVSFSTPFALGIFKPRTLMITSQVLFLAAGITLAVSPSHAVSLFGITLICAGFSVGFGVAMSQALGPFSLRAGVASSTLGIAQVCGSSLWIWLAAVVGIGAWNMLIGILIACSIVSLLLIMFVAPGRPVAAHEEIHHHA.

Helical transmembrane passes span 4-24 (FLIC…MYLV), 42-62 (IAFS…GKVA), 69-89 (PVAI…SLAE), 93-113 (LFLA…VVAF), 131-151 (LLNG…HLIM), 158-178 (SLFW…LFIL), 203-222 (FFLS…LTFV), 245-265 (ALTA…LGIF), 269-289 (TLMI…AVSP), 293-313 (VSLF…GVAM), 331-351 (LGIA…VVGI), and 356-376 (MLIG…MFVA).

This sequence belongs to the major facilitator superfamily. DHA1 family. MdtL (TC 2.A.1.2.22) subfamily.

The protein resides in the cell inner membrane. Functionally, confers resistance to chloramphenicol. In Escherichia coli (strain SMS-3-5 / SECEC), this protein is Multidrug resistance protein MdtL.